The chain runs to 94 residues: DNA-directed RNA polymerase subunit omega (94 aa).

Belongs to the RNA polymerase subunit omega family. As to quaternary structure, the RNAP catalytic core consists of 2 alpha, 1 beta, 1 beta' and 1 omega subunit. When a sigma factor is associated with the core the holoenzyme is formed, which can initiate transcription.

The enzyme catalyses RNA(n) + a ribonucleoside 5'-triphosphate = RNA(n+1) + diphosphate. Functionally, promotes RNA polymerase assembly. Latches the N- and C-terminal regions of the beta' subunit thereby facilitating its interaction with the beta and alpha subunits. This Frankia alni (strain DSM 45986 / CECT 9034 / ACN14a) protein is DNA-directed RNA polymerase subunit omega.